A 175-amino-acid chain; its full sequence is NADH-quinone oxidoreductase subunit I (175 aa).

2 4Fe-4S ferredoxin-type domains span residues 64-93 (KRDEQGRENCTACGLCAVSCPAEAITIIAD) and 110-139 (SLYEINMLRCIFCGLCEEACPKDAVYLTEE). Positions 73, 76, 79, 83, 119, 122, 125, and 129 each coordinate [4Fe-4S] cluster.

It belongs to the complex I 23 kDa subunit family. NDH-1 is composed of 14 different subunits. Subunits NuoA, H, J, K, L, M, N constitute the membrane sector of the complex. [4Fe-4S] cluster serves as cofactor.

The protein resides in the cell inner membrane. The catalysed reaction is a quinone + NADH + 5 H(+)(in) = a quinol + NAD(+) + 4 H(+)(out). Its function is as follows. NDH-1 shuttles electrons from NADH, via FMN and iron-sulfur (Fe-S) centers, to quinones in the respiratory chain. The immediate electron acceptor for the enzyme in this species is believed to be ubiquinone. Couples the redox reaction to proton translocation (for every two electrons transferred, four hydrogen ions are translocated across the cytoplasmic membrane), and thus conserves the redox energy in a proton gradient. The protein is NADH-quinone oxidoreductase subunit I of Cytophaga hutchinsonii (strain ATCC 33406 / DSM 1761 / CIP 103989 / NBRC 15051 / NCIMB 9469 / D465).